A 308-amino-acid chain; its full sequence is Small ribosomal subunit protein uS5c (308 aa).

Residues M1–Y55 constitute a chloroplast transit peptide. In terms of domain architecture, S5 DRBM spans F152–V215.

In terms of assembly, component of the chloroplast small ribosomal subunit (SSU). Mature 70S chloroplast ribosomes of higher plants consist of a small (30S) and a large (50S) subunit. The 30S small subunit contains 1 molecule of ribosomal RNA (16S rRNA) and 24 different proteins. The 50S large subunit contains 3 rRNA molecules (23S, 5S and 4.5S rRNA) and 33 different proteins. uS5c binds directly to 16S ribosomal RNA.

The protein localises to the plastid. It is found in the chloroplast. In terms of biological role, component of the chloroplast ribosome (chloro-ribosome), a dedicated translation machinery responsible for the synthesis of chloroplast genome-encoded proteins, including proteins of the transcription and translation machinery and components of the photosynthetic apparatus. In Spinacia oleracea (Spinach), this protein is Small ribosomal subunit protein uS5c (rps5).